The primary structure comprises 759 residues: Serine/threonine-protein kinase HRK1 (759 aa).

The segment at 1 to 32 (MPNLLSRNPFHGHHNDHHHDRENSSNNPPQLI) is disordered. Residue Ser37 is modified to Phosphoserine. Residues 45–162 (KQSNDSLRSE…PPPSKSTSTV (118 aa)) are disordered. The segment covering 59–97 (SMKSTTTTTNYTTTNLNNNTHSHSNATSISTNNYNNNYE) has biased composition (low complexity). Over residues 113–122 (SPASPKQTHS) the composition is skewed to polar residues. The Protein kinase domain maps to 215–722 (GKLGKLLGSG…LDDIFNDEWF (508 aa)). ATP contacts are provided by residues 221–229 (LGSGAGGSV) and Lys244. The Proton acceptor role is filled by Asp340. 2 positions are modified to phosphoserine: Ser382 and Ser472. The span at 493–502 (PNTPASIQGK) shows a compositional bias: polar residues. 2 disordered regions span residues 493-578 (PNTP…GRVD) and 614-682 (AANA…KIIH). Thr495 carries the phosphothreonine modification. Phosphoserine is present on Ser498. Residues 510–519 (VEEETEENKE) are compositionally biased toward acidic residues. Over residues 520-547 (DDSNNDKESTPDNDKESTIDIKISKNEN) the composition is skewed to basic and acidic residues. Positions 614 to 646 (AANANPDMVPQNNPQQQQQQQQQQQQQQQQQQQ) are enriched in low complexity. The segment covering 663–672 (ASDNKSSQQH) has biased composition (polar residues).

Belongs to the protein kinase superfamily. Ser/Thr protein kinase family.

The protein localises to the cytoplasm. It carries out the reaction L-seryl-[protein] + ATP = O-phospho-L-seryl-[protein] + ADP + H(+). The enzyme catalyses L-threonyl-[protein] + ATP = O-phospho-L-threonyl-[protein] + ADP + H(+). Its function is as follows. Involved in regulating the activity of the plasma membrane proton pump PMA1. This chain is Serine/threonine-protein kinase HRK1 (HRK1), found in Saccharomyces cerevisiae (strain ATCC 204508 / S288c) (Baker's yeast).